Consider the following 361-residue polypeptide: Anthranilate phosphoribosyltransferase (361 aa).

Residues G101, 104 to 105, T109, 111 to 114, 129 to 137, and S141 contribute to the 5-phospho-alpha-D-ribose 1-diphosphate site; these read GD, NIST, and KHGNRGVSS. G101 is an anthranilate binding site. S113 is a binding site for Mg(2+). N132 contacts anthranilate. R187 is an anthranilate binding site. Mg(2+) is bound by residues D245 and E246.

The protein belongs to the anthranilate phosphoribosyltransferase family. Homodimer. It depends on Mg(2+) as a cofactor.

The enzyme catalyses N-(5-phospho-beta-D-ribosyl)anthranilate + diphosphate = 5-phospho-alpha-D-ribose 1-diphosphate + anthranilate. Its pathway is amino-acid biosynthesis; L-tryptophan biosynthesis; L-tryptophan from chorismate: step 2/5. In terms of biological role, catalyzes the transfer of the phosphoribosyl group of 5-phosphorylribose-1-pyrophosphate (PRPP) to anthranilate to yield N-(5'-phosphoribosyl)-anthranilate (PRA). The polypeptide is Anthranilate phosphoribosyltransferase (Shewanella denitrificans (strain OS217 / ATCC BAA-1090 / DSM 15013)).